A 238-amino-acid polypeptide reads, in one-letter code: MAEDLAKQLAGYKAQLQQVESALTANGENEDLLKLKKDLQEVIELTKDLLSSQPSETADDACDDMSASGSQSWKVGEKCMAVWSDDGQWYEAEIEEIDEENGTAAITFAGYGNAEVTSLLNLRPVEEGRKAKEDSGNLPMSKKEMIAAQREYKKKKALKKAQRIKELEQEREDQKVKWQQFNNKAYSKNKKGQVKRSIFASPESVTGKVGVGTCGIADKPMTQYQDTSKYNVRHLMPQ.

The Tudor domain occupies Ser72–Lys132. Residues Lys142–Lys160 carry the Nuclear localization signal motif.

The protein belongs to the SMN family. As to quaternary structure, associates with spliceosomes.

The protein resides in the nucleus speckle. Its subcellular location is the nucleus. The protein localises to the cajal body. Functionally, involved in spliceosome assembly. The sequence is that of Survival of motor neuron-related-splicing factor 30 (smndc1) from Xenopus tropicalis (Western clawed frog).